Reading from the N-terminus, the 111-residue chain is Natriuretic peptide TNP-b (111 aa).

The signal sequence occupies residues M1–G27. A propeptide spanning residues K28–R71 is cleaved from the precursor. Disordered regions lie at residues V51–G77 and S92–S111. A disulfide bond links C80 and C96. Residues I107–S111 constitute a propeptide that is removed on maturation.

The protein belongs to the natriuretic peptide family. Expressed by the venom gland.

It localises to the secreted. In terms of biological role, snake venom natriuretic peptide that exhibits vasoactive and probable hypotensive activity. Is only weakly active on natriuretic peptide receptor-C (NPR3). This chain is Natriuretic peptide TNP-b, found in Oxyuranus scutellatus scutellatus (Australian taipan).